Consider the following 194-residue polypeptide: Endoribonuclease YbeY (194 aa).

Histidine 151, histidine 155, and histidine 161 together coordinate Zn(2+).

This sequence belongs to the endoribonuclease YbeY family. Requires Zn(2+) as cofactor.

It is found in the cytoplasm. In terms of biological role, single strand-specific metallo-endoribonuclease involved in late-stage 70S ribosome quality control and in maturation of the 3' terminus of the 16S rRNA. This chain is Endoribonuclease YbeY, found in Gloeobacter violaceus (strain ATCC 29082 / PCC 7421).